The following is a 340-amino-acid chain: Sterol-4-alpha-carboxylate 3-dehydrogenase erg26, decarboxylating (340 aa).

The active-site Proton acceptor is the Y144. K148 contacts NAD(+).

This sequence belongs to the 3-beta-HSD family. As to quaternary structure, heterotetramer of erg25, erg26, erg27 and erg28. Erg28 acts as a scaffold to tether erg27 and other 4,4-demethylation-related enzymes, forming a demethylation enzyme complex, in the endoplasmic reticulum.

Its subcellular location is the endoplasmic reticulum membrane. The enzyme catalyses 4beta-methylzymosterol-4alpha-carboxylate + NADP(+) = 3-dehydro-4-methylzymosterol + CO2 + NADPH. It participates in steroid biosynthesis; zymosterol biosynthesis; zymosterol from lanosterol: step 4/6. Its pathway is steroid metabolism; ergosterol biosynthesis. Its function is as follows. Sterol-4-alpha-carboxylate 3-dehydrogenase; part of the third module of ergosterol biosynthesis pathway that includes by the late steps of the pathway. Erg26 is a catalytic component of the C-4 demethylation complex that catalyzes the oxidative decarboxylation that results in a reduction of the 3-beta-hydroxy group at the C-3 carbon to an oxo group. The third module or late pathway involves the ergosterol synthesis itself through consecutive reactions that mainly occur in the endoplasmic reticulum (ER) membrane. Firstly, the squalene synthase erg9 catalyzes the condensation of 2 farnesyl pyrophosphate moieties to form squalene, which is the precursor of all steroids. Secondly, squalene is converted into lanosterol by the consecutive action of the squalene epoxidase erg1 and the lanosterol synthase erg7. The lanosterol 14-alpha-demethylase erg11/cyp1 catalyzes C14-demethylation of lanosterol to produce 4,4'-dimethyl cholesta-8,14,24-triene-3-beta-ol. In the next steps, a complex process involving various demethylation, reduction and desaturation reactions catalyzed by the C-14 reductase erg24 and the C-4 demethylation complex erg25-erg26-erg27 leads to the production of zymosterol. Erg28 likely functions in the C-4 demethylation complex reaction by tethering erg26 and Erg27 to the endoplasmic reticulum or to facilitate interaction between these proteins. Then, the sterol 24-C-methyltransferase erg6 catalyzes the methyl transfer from S-adenosyl-methionine to the C-24 of zymosterol to form fecosterol. The C-8 sterol isomerase erg2 catalyzes the reaction which results in unsaturation at C-7 in the B ring of sterols and thus converts fecosterol to episterol. The sterol-C5-desaturases erg31 and erg32 then catalyze the introduction of a C-5 double bond in the B ring to produce 5-dehydroepisterol. The C-22 sterol desaturase erg5 further converts 5-dehydroepisterol into ergosta-5,7,22,24(28)-tetraen-3beta-ol by forming the C-22(23) double bond in the sterol side chain. Finally, ergosta-5,7,22,24(28)-tetraen-3beta-ol is substrate of the C-24(28) sterol reductase erg4 to produce ergosterol. In the genus Schizosaccharomyces, a second route exists between lanosterol and fecosterol, via the methylation of lanosterol to eburicol by erg6, followed by C14-demethylation by erg11/cyp1 and C4-demethylation by the demethylation complex erg25-erg26-erg27. This is Sterol-4-alpha-carboxylate 3-dehydrogenase erg26, decarboxylating from Schizosaccharomyces pombe (strain 972 / ATCC 24843) (Fission yeast).